Consider the following 173-residue polypeptide: Small ribosomal subunit protein uS13 (173 aa).

Over residues 130-143 (GVRHKRGQKVRGQR) the composition is skewed to basic residues. A disordered region spans residues 130 to 155 (GVRHKRGQKVRGQRTKSTGRTEGTIG).

This sequence belongs to the universal ribosomal protein uS13 family. Part of the 30S ribosomal subunit. Forms a loose heterodimer with protein S19. Forms two bridges to the 50S subunit in the 70S ribosome.

In terms of biological role, located at the top of the head of the 30S subunit, it contacts several helices of the 16S rRNA. In the 70S ribosome it contacts the 23S rRNA (bridge B1a) and protein L5 of the 50S subunit (bridge B1b), connecting the 2 subunits; these bridges are implicated in subunit movement. This Haloquadratum walsbyi (strain DSM 16790 / HBSQ001) protein is Small ribosomal subunit protein uS13.